A 163-amino-acid polypeptide reads, in one-letter code: UPF0416 protein RBE_0909 (163 aa).

Belongs to the UPF0416 family.

The sequence is that of UPF0416 protein RBE_0909 from Rickettsia bellii (strain RML369-C).